The chain runs to 305 residues: MQRSNHTVTEFILLGFTTDPGMQLGLFVVFLGVYSLTVVGNSTLIVLICNDSHLHTPMYFVVGNLSFLDLWYSSVYTPKILVICISEDKSISFAGCLCQFFFSAGLAYSECCLLAAMAYDRYVAISKPLLYAQAMSIKLCALLVAVSYCGGFINSSIITKKTFSFNFCCENIIDDFFCDLLPLVKLACGEKGCYKFLMYFLLASNVICPAVLILASYLFIITSVLRISSSQGRLKAFSTCSSHLTSVTLYYGSILYIYALPRSSYSFDMDKIVSTFYTEVLPMLNPMIYSLRNKDVKEALKKLLP.

Residues 1–27 lie on the Extracellular side of the membrane; that stretch reads MQRSNHTVTEFILLGFTTDPGMQLGLF. N-linked (GlcNAc...) asparagine glycosylation is present at asparagine 5. A helical membrane pass occupies residues 28-48; that stretch reads VVFLGVYSLTVVGNSTLIVLI. The Cytoplasmic portion of the chain corresponds to 49 to 64; the sequence is CNDSHLHTPMYFVVGN. Residues 65–85 form a helical membrane-spanning segment; the sequence is LSFLDLWYSSVYTPKILVICI. The Extracellular portion of the chain corresponds to 86-96; the sequence is SEDKSISFAGC. A disulfide bond links cysteine 96 and cysteine 178. The chain crosses the membrane as a helical span at residues 97 to 117; that stretch reads LCQFFFSAGLAYSECCLLAAM. Over 118 to 138 the chain is Cytoplasmic; sequence AYDRYVAISKPLLYAQAMSIK. Residues 139–159 traverse the membrane as a helical segment; it reads LCALLVAVSYCGGFINSSIIT. At 160 to 200 the chain is on the extracellular side; the sequence is KKTFSFNFCCENIIDDFFCDLLPLVKLACGEKGCYKFLMYF. The chain crosses the membrane as a helical span at residues 201–221; the sequence is LLASNVICPAVLILASYLFII. Residues 222–239 lie on the Cytoplasmic side of the membrane; it reads TSVLRISSSQGRLKAFST. A helical transmembrane segment spans residues 240-260; sequence CSSHLTSVTLYYGSILYIYAL. The Extracellular portion of the chain corresponds to 261 to 271; that stretch reads PRSSYSFDMDK. A helical membrane pass occupies residues 272 to 291; the sequence is IVSTFYTEVLPMLNPMIYSL. The Cytoplasmic portion of the chain corresponds to 292-305; the sequence is RNKDVKEALKKLLP.

This sequence belongs to the G-protein coupled receptor 1 family.

It localises to the cell membrane. In terms of biological role, odorant receptor. The polypeptide is Olfactory receptor 9G9 (OR9G9) (Homo sapiens (Human)).